A 153-amino-acid polypeptide reads, in one-letter code: Glucose-6-phosphate 1-dehydrogenase (153 aa).

Positions 21 and 120 each coordinate NADP(+). K120 contributes to the D-glucose 6-phosphate binding site.

The protein belongs to the glucose-6-phosphate dehydrogenase family.

It localises to the cytoplasm. The protein resides in the cytosol. It catalyses the reaction D-glucose 6-phosphate + NADP(+) = 6-phospho-D-glucono-1,5-lactone + NADPH + H(+). It participates in carbohydrate degradation; pentose phosphate pathway; D-ribulose 5-phosphate from D-glucose 6-phosphate (oxidative stage): step 1/3. Cytosolic glucose-6-phosphate dehydrogenase that catalyzes the first and rate-limiting step of the oxidative branch within the pentose phosphate pathway/shunt, an alternative route to glycolysis for the dissimilation of carbohydrates and a major source of reducing power and metabolic intermediates for fatty acid and nucleic acid biosynthetic processes. The polypeptide is Glucose-6-phosphate 1-dehydrogenase (ZW) (Hyalophora cecropia (Cecropia moth)).